Reading from the N-terminus, the 396-residue chain is Succinyl-CoA:mesaconate CoA-transferase (396 aa).

The active-site Nucleophile is the Asp175.

Belongs to the CoA-transferase III family. As to quaternary structure, homodimer.

It carries out the reaction mesaconate + succinyl-CoA = 2-methylfumaryl-CoA + succinate. Shows highest activity at 4 M KCl. Does not require divalent ions for activity. Involved in the methylaspartate cycle. Catalyzes the transfer of the CoA moiety from succinyl-CoA to mesaconate to generate mesaconyl-CoA (2-methylfumaryl-CoA) and succinate. Also shows high activity with methylsuccinate as CoA-acceptor, and only low activity with glutarate, acrylate and itaconate. Cannot use other CoA donors like acetyl-CoA, propionyl-CoA, butyryl-CoA or acetoacetyl-CoA. This Haloarcula hispanica (strain ATCC 33960 / DSM 4426 / JCM 8911 / NBRC 102182 / NCIMB 2187 / VKM B-1755) protein is Succinyl-CoA:mesaconate CoA-transferase.